The primary structure comprises 382 residues: uncharacterized protein (382 aa).

A run of 12 helical transmembrane segments spans residues 14 to 34 (GLLL…LWLA), 45 to 65 (VVSS…GYVI), 79 to 99 (FIFA…SWLA), 102 to 122 (FVAG…LMCS), 131 to 151 (LLAA…LLVS), 157 to 177 (LMSV…PLLF), 204 to 224 (LGVN…GLMP), 235 to 255 (ASIG…QWPI), 270 to 290 (VQVF…AMAP), 291 to 311 (ALFI…AWAC), 325 to 345 (ALLL…AMLM), and 348 to 368 (FSDN…LLML).

This sequence belongs to the major facilitator superfamily. YcaD (TC 2.A.1.26) family.

It localises to the cell inner membrane. This is an uncharacterized protein from Escherichia coli O7:K1 (strain IAI39 / ExPEC).